Reading from the N-terminus, the 124-residue chain is Histone H2A (124 aa).

A compositionally biased stretch (basic residues) spans 1–18 (MSGRGKSGKARTKAKSRS). Positions 1-21 (MSGRGKSGKARTKAKSRSSRA) are disordered. At serine 2 the chain carries N-acetylserine. Phosphoserine is present on serine 2. N5-methylglutamine is present on glutamine 104. Lysine 119 participates in a covalent cross-link: Glycyl lysine isopeptide (Lys-Gly) (interchain with G-Cter in ubiquitin).

Belongs to the histone H2A family. The nucleosome is a histone octamer containing two molecules each of H2A, H2B, H3 and H4 assembled in one H3-H4 heterotetramer and two H2A-H2B heterodimers. The octamer wraps approximately 147 bp of DNA. Post-translationally, monoubiquitination of Lys-119 gives a specific tag for epigenetic transcriptional repression. Phosphorylation of Ser-2 directly represses transcription.

The protein resides in the nucleus. It localises to the chromosome. Its function is as follows. Core component of nucleosome. Nucleosomes wrap and compact DNA into chromatin, limiting DNA accessibility to the cellular machineries which require DNA as a template. Histones thereby play a central role in transcription regulation, DNA repair, DNA replication and chromosomal stability. DNA accessibility is regulated via a complex set of post-translational modifications of histones, also called histone code, and nucleosome remodeling. The protein is Histone H2A of Paracentrotus lividus (Common sea urchin).